The chain runs to 355 residues: MAIDENKQKALAAALGQIEKQFGKGSIMRLGEDRSMNVETISTGSLSLDVALGAGGLPRGRIVEIYGPESSGKTTLTLQVIASAQREGKICAFIDAEHALDPIYAQKLGVDIDNLLCSQPDTGEQALEICDALSRSGAVDVIVVDSVAALTPKAEIEGEIGDSHVGLAARMMSQAMRKLAGNLKNSNTLLIFINQIRMKIGVMFGNPETTTGGNALKFYASVRLDIRRIGSVKNGDEVIGSETRVKVVKNKVAAPFKQAEFQIMYGEGINTYGELIDLGVKHKLVEKAGAWYSYNGEKIGQGKANATNYLKEHPEMYNELNTKLREMLLNHAGEFTSAADFAGEESDSDADDTKE.

67–74 (GPESSGKT) contributes to the ATP binding site.

Belongs to the RecA family.

The protein resides in the cytoplasm. Its function is as follows. Can catalyze the hydrolysis of ATP in the presence of single-stranded DNA, the ATP-dependent uptake of single-stranded DNA by duplex DNA, and the ATP-dependent hybridization of homologous single-stranded DNAs. It interacts with LexA causing its activation and leading to its autocatalytic cleavage. This is Protein RecA from Proteus mirabilis (strain HI4320).